A 424-amino-acid polypeptide reads, in one-letter code: Imidazolonepropionase (424 aa).

Residues histidine 81 and histidine 83 each contribute to the Fe(3+) site. Residues histidine 81 and histidine 83 each contribute to the Zn(2+) site. Residues arginine 90, tyrosine 153, and histidine 186 each coordinate 4-imidazolone-5-propanoate. Residue tyrosine 153 coordinates N-formimidoyl-L-glutamate. Histidine 251 lines the Fe(3+) pocket. Histidine 251 provides a ligand contact to Zn(2+). Glutamate 254 contributes to the 4-imidazolone-5-propanoate binding site. Aspartate 325 lines the Fe(3+) pocket. Aspartate 325 is a binding site for Zn(2+). Asparagine 327 and glycine 329 together coordinate N-formimidoyl-L-glutamate. Threonine 330 contacts 4-imidazolone-5-propanoate.

The protein belongs to the metallo-dependent hydrolases superfamily. HutI family. Zn(2+) serves as cofactor. It depends on Fe(3+) as a cofactor.

Its subcellular location is the cytoplasm. It carries out the reaction 4-imidazolone-5-propanoate + H2O = N-formimidoyl-L-glutamate. Its pathway is amino-acid degradation; L-histidine degradation into L-glutamate; N-formimidoyl-L-glutamate from L-histidine: step 3/3. Catalyzes the hydrolytic cleavage of the carbon-nitrogen bond in imidazolone-5-propanoate to yield N-formimidoyl-L-glutamate. It is the third step in the universal histidine degradation pathway. The sequence is that of Imidazolonepropionase from Syntrophobacter fumaroxidans (strain DSM 10017 / MPOB).